Consider the following 66-residue polypeptide: Photosystem II reaction center protein J (66 aa).

A helical membrane pass occupies residues 37–57; sequence LWLVATAGGMAVLFVVGLFFY.

It belongs to the PsbJ family. As to quaternary structure, PSII is composed of 1 copy each of membrane proteins PsbA, PsbB, PsbC, PsbD, PsbE, PsbF, PsbH, PsbI, PsbJ, PsbK, PsbL, PsbM, PsbT, PsbX, PsbY, PsbZ, Psb30/Ycf12, peripheral proteins PsbO, CyanoQ (PsbQ), PsbU, PsbV and a large number of cofactors. It forms dimeric complexes.

It is found in the cellular thylakoid membrane. In terms of biological role, one of the components of the core complex of photosystem II (PSII). PSII is a light-driven water:plastoquinone oxidoreductase that uses light energy to abstract electrons from H(2)O, generating O(2) and a proton gradient subsequently used for ATP formation. It consists of a core antenna complex that captures photons, and an electron transfer chain that converts photonic excitation into a charge separation. The sequence is that of Photosystem II reaction center protein J from Synechococcus sp. (strain WH7803).